Consider the following 1426-residue polypeptide: A disintegrin and metalloproteinase with thrombospondin motifs 13 (1426 aa).

Positions 1–33 (MSQLCLWLTCQPCYAVSVRGILTGAIFILGCWG) are cleaved as a signal peptide. A propeptide spanning residues 34–76 (LSDFQKSLLQDLEPKDVSSYFGHHAAPFTGHPPSHLQRLRRRR) is cleaved from the precursor. In terms of domain architecture, Peptidase M12B spans 74–291 (RRRTLEDILH…GQMHCFQDPP (218 aa)). Residue Glu85 participates in Ca(2+) binding. Asn144 and Asn148 each carry an N-linked (GlcNAc...) asparagine glycan. Intrachain disulfides connect Cys157/Cys210, Cys204/Cys286, and Cys246/Cys270. 5 residues coordinate Ca(2+): Asp175, Asp184, Glu186, Asp189, and Glu214. A Zn(2+)-binding site is contributed by His226. Residue Glu227 is part of the active site. His230 and His236 together coordinate Zn(2+). The Ca(2+) site is built by Thr281 and Asp289. Residues 295 to 388 (SGLTRHQLMA…LAELAPVAAV (94 aa)) enclose the Disintegrin domain. 11 cysteine pairs are disulfide-bonded: Cys316-Cys342, Cys327-Cys352, Cys337-Cys371, Cys365-Cys376, Cys401-Cys438, Cys405-Cys443, Cys416-Cys428, Cys488-Cys527, Cys513-Cys532, Cys537-Cys553, and Cys550-Cys560. The TSP type-1 1 domain occupies 389 to 444 (HGHWSSWGPHSPCSRSCGGGVITRRRWCNNPRPAFGGRACVGEDLQAKMCNTQACE). Positions 445–561 (KTQLEFMSEQ…VCGGDNSTCS (117 aa)) are cysteine-rich. The short motif at 503–505 (RGD) is the Cell attachment site element. A spacer region spans residues 556 to 685 (DNSTCSSRNG…PDITFSYFQL (130 aa)). N-linked (GlcNAc...) asparagine glycans are attached at residues Asn557, Asn564, Asn584, and Asn619. TSP type-1 domains are found at residues 687-746 (QQAA…VSAP), 747-810 (CSPY…QPCP), 808-871 (PCPT…SLCS), 904-957 (WTPL…RARP), 958-1019 (CPAR…EPCP), 1020-1078 (ARWK…IADC), and 1079-1137 (AFRW…GPCA). Ser703 and Ser762 each carry an O-linked (Fuc...) serine glycan. Asn834 is a glycosylation site (N-linked (GlcNAc...) asparagine). Ser914 carries O-linked (Fuc...) serine glycosylation. The O-linked (Fuc...) threonine glycan is linked to Thr973. Ser1033 is a glycosylation site (O-linked (Fuc...) serine). Asn1057 carries N-linked (GlcNAc...) asparagine glycosylation. Ser1093 is a glycosylation site (O-linked (Fuc...) serine). 2 consecutive CUB domains span residues 1195–1302 (ACGR…FYKE) and 1293–1426 (QPAP…LALS).

Requires Zn(2+) as cofactor. The cofactor is Ca(2+). The precursor is processed by a furin endopeptidase which cleaves off the pro-domain. Post-translationally, O-glycosylated. O-fucosylated by POFUT2 on a serine or a threonine residue found within the consensus sequence C1-X(2)-(S/T)-C2-G of the TSP type-1 repeat domains where C1 and C2 are the first and second cysteine residue of the repeat, respectively. Fucosylated repeats can then be further glycosylated by the addition of a beta-1,3-glucose residue by the glucosyltransferase, B3GALTL. Fucosylation mediates the efficient secretion of ADAMTS13. May also be C-glycosylated on tryptophan residues within the consensus sequence W-X-X-W of the TPRs, and also N-glycosylated. These other glycosylations can also facilitate secretion. In terms of tissue distribution, plasma. Expression is consistently high in liver, medium in lung and spleen, low in skeletal muscle and undetectable in heart, brain, kidney and testis.

It localises to the secreted. It carries out the reaction The enzyme cleaves the von Willebrand factor at bond 842-Tyr-|-Met-843 within the A2 domain.. With respect to regulation, zinc and calcium ions cooperatively modulate enzyme activity. The cleavage of the pro-domain is not required for protease activity. Dependence on calcium for proteolytic activity is mediated by the high affinity site. Cleaves the vWF multimers in plasma into smaller forms thereby controlling vWF-mediated platelet thrombus formation. This chain is A disintegrin and metalloproteinase with thrombospondin motifs 13 (Adamts13), found in Mus musculus (Mouse).